The following is a 60-amino-acid chain: Large ribosomal subunit protein bL32 (60 aa).

Positions 1-60 (MAVQQNKKSPSKRGMHRSHNALTVPGIAVESTTGETHLRHHISPTGFYRGRKVLKTKSEA) are disordered. Basic residues-rich tracts occupy residues 9–19 (SPSKRGMHRSH) and 49–60 (RGRKVLKTKSEA).

This sequence belongs to the bacterial ribosomal protein bL32 family.

The sequence is that of Large ribosomal subunit protein bL32 from Polaromonas sp. (strain JS666 / ATCC BAA-500).